Consider the following 606-residue polypeptide: Gamma-aminobutyric acid receptor subunit beta (606 aa).

The N-terminal stretch at 1–44 (MSDSKMDKLARMAPLPRTPLLTIWLAINMALIAQETGHKRIHTV) is a signal peptide. Residues 45–268 (QAATGGGSML…CEIQFVRSMG (224 aa)) lie on the Extracellular side of the membrane. An N-linked (GlcNAc...) asparagine glycan is attached at Asn58. The cysteines at positions 185 and 199 are disulfide-linked. Asn253 carries an N-linked (GlcNAc...) asparagine glycan. 3 consecutive transmembrane segments (helical) span residues 269 to 291 (YYLIQIYIPSGLIVIISWVSFWL), 297 to 316 (PARVALGVTTVLTMTTLMSS), and 333 to 356 (YLGTCFVMVFASLLEYATVGYMAK). The Cytoplasmic segment spans residues 357–568 (RIQMRKQRFM…LGITPSDIDK (212 aa)). 2 disordered regions span residues 376–451 (KQQL…VSNR) and 482–542 (HDPK…AAVP). The span at 381–395 (GANQQQANPNPNANV) shows a compositional bias: low complexity. The segment covering 396–425 (GGPGGVGVGPGGPGGPGGGVNVGVGMGMGP) has biased composition (gly residues). Residues 430 to 443 (GHGHHAHSHGHPHA) are compositionally biased toward basic residues. A compositionally biased stretch (gly residues) spans 499–536 (GGRGGPQSHGPGPGQGGGPPGGGGGGGGGGGPPEGGGD). Residues 569-590 (YSRIVFPVCFVCFNLMYWIIYL) traverse the membrane as a helical segment.

The protein belongs to the ligand-gated ion channel (TC 1.A.9) family. Gamma-aminobutyric acid receptor (TC 1.A.9.5) subfamily. In terms of assembly, forms oligomers. Interacts with Nlg4; the interaction mediates Rdl clustering. Interacts with Fbxl4; the interaction mediates Rdl degradation. In terms of tissue distribution, expressed in different parts of the brain: the mushroom bodies (alpha, alpha', beta, beta', gamma lobes and peduncles), the neurons projecting to the columnar-type neuron LC9 optic glomerulus, in interneurons connecting the paired olfactory lobes, antennal lobes, PDF-expressing small and large ventral lateral neurons (LNvs) of the circadian clock and lobula columnar neuron 11 (LC11) (at protein level). Expressed in all major ON pathway medulla neurons (Mi1, Tm3, Mi4, and Mi9) and in OFF pathway neurons (Tm1, Tm2, Tm4, and Tm9).

It localises to the cell membrane. The protein resides in the postsynaptic cell membrane. Its subcellular location is the cell projection. It is found in the dendrite. The protein localises to the axon. Activated by agonist muscimol. Insensitive to zinc, glycine, glutamate, and baclofen, loreclezole, to antagonist bicuculline, glycine-receptor antagonist strychnine, and nonselective GABA and glycine antagonist RU 5135. Insensitive to flunitrazepam, pentobarbitone or pregnane steroids such as 5alpha-pregnan-3alpha-ol-20-one. Inhibited by insecticides picrotoxin (PTX), cyclodiene dieldrin, TBPS and lindane. Inhibited by ivermectin, fipronil and pyrafluprole. With respect to regulation, inhibited by insecticides picrotoxin (PTX). Functionally, gamma-aminobutyric acid (GABA) receptor voltage channel subunit. GABA, an inhibitory neurotransmitter, mediates neuronal inhibition by binding to the GABA receptor and opening an integral chloride channel. Together with glutamate receptor GluClalpha, plays an important role in the visual response by regulating the activity of ON/OFF-selective neurons. Plays a role in promoting sleep and sleep latency by regulating the activity of peptidergic PDF neurons. In large ventral lateral clock neurons, clustering is mediated by Nlg4 and protein levels undergo daily degradation in response to the circadian clock. In neurons in the mushroom bodies, has a role in odor memory acquisition where it inhibits appetitive and aversive olfactory learning, probably upstream of Adcy1/adenylate cyclase 1 and GTPase activating protein Nf1. In male-specific GABAergic neurons, plays a role in inhibiting male aggressive behavior during courtship. In terms of biological role, gamma-aminobutyric acid (GABA) receptor voltage channel subunit. The sequence is that of Gamma-aminobutyric acid receptor subunit beta (Rdl) from Drosophila melanogaster (Fruit fly).